The following is a 312-amino-acid chain: Malate dehydrogenase (312 aa).

NAD(+)-binding positions include 12–17 (GAGFTG) and Asp36. Substrate-binding residues include Arg87 and Arg93. NAD(+) is bound by residues Asn100 and 123-125 (LTN). Residue Asn125 participates in substrate binding. At Ser149 the chain carries Phosphoserine. Arg156 lines the substrate pocket. The active-site Proton acceptor is His180.

This sequence belongs to the LDH/MDH superfamily. MDH type 3 family.

It catalyses the reaction (S)-malate + NAD(+) = oxaloacetate + NADH + H(+). Catalyzes the reversible oxidation of malate to oxaloacetate. The chain is Malate dehydrogenase from Bacillus pumilus (strain SAFR-032).